Reading from the N-terminus, the 186-residue chain is Cytochrome c oxidase polypeptide 5, mitochondrial (186 aa).

The transit peptide at 1 to 20 directs the protein to the mitochondrion; sequence MYLSKIICKKVPMKLLCTRN. Residues 21-107 are Mitochondrial matrix-facing; it reads AATVSAAATN…GPRAFSHISQ (87 aa). The helical transmembrane segment at 108–128 threads the bilayer; it reads KTVFWGTVAGLTIGVVLFGLI. Over 129–186 the chain is Mitochondrial intermembrane; that stretch reads RTQAAPSPRTMTREWQEKSNEYMKENKINPISGEASEGFKGRGQISGGIFSPSEKDKK. The disordered stretch occupies residues 149–186; that stretch reads EYMKENKINPISGEASEGFKGRGQISGGIFSPSEKDKK.

It belongs to the cytochrome c oxidase IV family. Component of the cytochrome c oxidase (complex IV, CIV), a multisubunit enzyme composed of a catalytic core of 3 subunits and seevral supernumerary subunits. The complex exists as a monomer or a dimer and forms supercomplexes (SCs) in the inner mitochondrial membrane with ubiquinol-cytochrome c oxidoreductase (cytochrome b-c1 complex, complex III, CIII).

Its subcellular location is the mitochondrion inner membrane. The protein operates within energy metabolism; oxidative phosphorylation. Functionally, component of the cytochrome c oxidase, the last enzyme in the mitochondrial electron transport chain which drives oxidative phosphorylation. The respiratory chain contains 3 multisubunit complexes succinate dehydrogenase (complex II, CII), ubiquinol-cytochrome c oxidoreductase (cytochrome b-c1 complex, complex III, CIII) and cytochrome c oxidase (complex IV, CIV), that cooperate to transfer electrons derived from NADH and succinate to molecular oxygen, creating an electrochemical gradient over the inner membrane that drives transmembrane transport and the ATP synthase. Cytochrome c oxidase is the component of the respiratory chain that catalyzes the reduction of oxygen to water. Electrons originating from reduced cytochrome c in the intermembrane space (IMS) are transferred via the dinuclear copper A center (CU(A)) of subunit 2 and heme A of subunit 1 to the active site in subunit 1, a binuclear center (BNC) formed by heme A3 and copper B (CU(B)). The BNC reduces molecular oxygen to 2 water molecules using 4 electrons from cytochrome c in the IMS and 4 protons from the mitochondrial matrix. The chain is Cytochrome c oxidase polypeptide 5, mitochondrial (cox5) from Schizosaccharomyces pombe (strain 972 / ATCC 24843) (Fission yeast).